We begin with the raw amino-acid sequence, 228 residues long: MKKAVVLLSGGLDSTTCLALAKSQGFACYALSFSYGQRHSAELCAATRIAKHMGAADHKIVTLDIALFGGSALTDASIEVPEFKESPEIPVTYVPARNTIFLAMALGYAESIGARDIFIGASSVDYSHYPDCRPEFIESFQSLANLATKAGIEGDRFTINAPLQYLSKVQTIQLGTELGVDYGLTVSCYQANEAGEACGQCDSCTFRKRGFKSAGVDDPTRYQKCVHI.

8–18 serves as a coordination point for ATP; the sequence is LSGGLDSTTCL. Cys-188, Cys-198, Cys-201, and Cys-204 together coordinate Zn(2+).

This sequence belongs to the QueC family. The cofactor is Zn(2+).

The catalysed reaction is 7-carboxy-7-deazaguanine + NH4(+) + ATP = 7-cyano-7-deazaguanine + ADP + phosphate + H2O + H(+). The protein operates within purine metabolism; 7-cyano-7-deazaguanine biosynthesis. Its function is as follows. Catalyzes the ATP-dependent conversion of 7-carboxy-7-deazaguanine (CDG) to 7-cyano-7-deazaguanine (preQ(0)). The polypeptide is 7-cyano-7-deazaguanine synthase (Legionella pneumophila subsp. pneumophila (strain Philadelphia 1 / ATCC 33152 / DSM 7513)).